The sequence spans 138 residues: Large ribosomal subunit protein uL16 (138 aa).

Over residues 1-13 (MLQPARRKFRKEQ) the composition is skewed to basic residues. A disordered region spans residues 1–22 (MLQPARRKFRKEQKGRNTGVAT).

The protein belongs to the universal ribosomal protein uL16 family. As to quaternary structure, part of the 50S ribosomal subunit.

In terms of biological role, binds 23S rRNA and is also seen to make contacts with the A and possibly P site tRNAs. This Acidovorax ebreus (strain TPSY) (Diaphorobacter sp. (strain TPSY)) protein is Large ribosomal subunit protein uL16.